The sequence spans 618 residues: MKQSKLLIPTLREMPSDAQVISHALMVRAGYVRQVSAGIYAYLPLANRTIEKFKTIMREEFEKIGAVEMLAPALLTADLWRESGRYETYGEDLYKLKNRDNSDFILGPTHEETFTTLVRDAVKSYKQLPLNLYQIQSKYRDEKRPRNGLLRTREFIMKDGYSFHHNYEDLDVTYEDYRQAYEAIFTRAGLDFKGIIGDGGAMGGKDSQEFMAITPARTDLDRWVVLDKSIASMDDIPKEVLEDIKAELAAWMISGEDTIAYSTESSYAANLEMATNEYKPSSKVAAEDALAEVETPHCKTIDEVAAFLSVDETQTIKTLLFVADNEPVVALLVGNDHINTVKLKNYLAADFLEPASEEEARAFFGAGFGSLGPVNLAQGSRIVADRKVQNLTNAVAGANKDGFHMTGVNPGRDFQAEYVDIREVKEGEMSPDGHGVLQFARGIEVGHIFKLGTRYSDSMGATILDENGRTVPIVMGCYGIGVSRILSAVIEQHARLFVNKTPKGDYRYAWGINFPKELAPFDVHLITVNVKDQVAQDLTAKLEADLMAKGYDVLTDDRNERVGSKFSDSDLIGLPIRVTVGKKAAEGIVEIKIKATGDSIEVNAENLIETLEILTKEH.

The protein belongs to the class-II aminoacyl-tRNA synthetase family. ProS type 1 subfamily. In terms of assembly, homodimer.

The protein resides in the cytoplasm. The enzyme catalyses tRNA(Pro) + L-proline + ATP = L-prolyl-tRNA(Pro) + AMP + diphosphate. In terms of biological role, catalyzes the attachment of proline to tRNA(Pro) in a two-step reaction: proline is first activated by ATP to form Pro-AMP and then transferred to the acceptor end of tRNA(Pro). As ProRS can inadvertently accommodate and process non-cognate amino acids such as alanine and cysteine, to avoid such errors it has two additional distinct editing activities against alanine. One activity is designated as 'pretransfer' editing and involves the tRNA(Pro)-independent hydrolysis of activated Ala-AMP. The other activity is designated 'posttransfer' editing and involves deacylation of mischarged Ala-tRNA(Pro). The misacylated Cys-tRNA(Pro) is not edited by ProRS. The chain is Proline--tRNA ligase from Streptococcus pyogenes serotype M1.